Consider the following 1031-residue polypeptide: Zinc finger protein 445 (1031 aa).

The disordered stretch occupies residues 1 to 43 (MPPGRWHAAYPAQAQSSRERGRLQTVKKEEEDESYTPVQAARP). Residues 17–29 (SRERGRLQTVKKE) show a composition bias toward basic and acidic residues. A Glycyl lysine isopeptide (Lys-Gly) (interchain with G-Cter in SUMO1) cross-link involves residue K28. One can recognise an SCAN box domain in the interval 55–137 (RQLFRQLRYH…ALLEELQRDL (83 aa)). Positions 234 to 304 (MTFKDVEVTF…NMQAAQPKGN (71 aa)) constitute a KRAB domain. Glycyl lysine isopeptide (Lys-Gly) (interchain with G-Cter in SUMO2) cross-links involve residues K317, K374, K375, and K399. 3 consecutive C2H2-type zinc fingers follow at residues 485 to 507 (FKCSDCGRTFSHSSHLAYHQRLH), 513 to 535 (FKCRVCGKAFRWSSNCARHEKIH), and 541 to 563 (YKCDLCEKAFRRLSAYRLHRETH). Residue K567 forms a Glycyl lysine isopeptide (Lys-Gly) (interchain with G-Cter in SUMO2) linkage. 2 consecutive C2H2-type zinc fingers follow at residues 597 to 619 (FDCSQCRKSFHCKSYVLEHQRIH) and 625 to 647 (YKCTKCRKTFRWRSNFTRHMRLH). Residue K654 forms a Glycyl lysine isopeptide (Lys-Gly) (interchain with G-Cter in SUMO2) linkage. C2H2-type zinc fingers lie at residues 681 to 703 (FLCQQCGKTFTRKKTLVDHQRIH) and 709 to 731 (YQCSDCGKDFAYRSAFIVHKKKH). Glycyl lysine isopeptide (Lys-Gly) (interchain with G-Cter in SUMO2) cross-links involve residues K736 and K758. 5 consecutive C2H2-type zinc fingers follow at residues 762-784 (YKCSQCGKAFRNHSFLLIHQRVH), 790-812 (YKCRECGKAFRWSSNLYRHQRIH), 840-862 (FWCQECGKTFTRKRTLLDHKGIH), 868-890 (YKCNLCGKSYDRNYRLVNHQRIH), and 896-918 (FKCQWCGKEFIGRHTLSSHQRKH). A disordered region spans residues 911–939 (LSSHQRKHTRAAQAERSPPARSSSQDTKL). Glycyl lysine isopeptide (Lys-Gly) (interchain with G-Cter in SUMO2) cross-links involve residues K938, K956, and K975. 2 C2H2-type zinc fingers span residues 978–1000 (HKCSICGKTFNKSSQLISHKRFH) and 1006–1028 (FKCSKCGKTFRWSSNLARHMKNH).

The protein belongs to the krueppel C2H2-type zinc-finger protein family.

It localises to the nucleus. In terms of biological role, transcription regulator required to maintain maternal and paternal gene imprinting, a process by which gene expression is restricted in a parent of origin-specific manner by epigenetic modification of genomic DNA and chromatin, including DNA methylation. Acts by controlling DNA methylation during the earliest multicellular stages of development at multiple imprinting control regions (ICRs). Acts together with ZFP57, but seems to be the major factor in human early embryonic imprinting maintenance. In contrast, in mice, ZFP57 plays the predominant role in imprinting maintenance. The sequence is that of Zinc finger protein 445 from Homo sapiens (Human).